The sequence spans 117 residues: Large ribosomal subunit protein uL18 (117 aa).

Belongs to the universal ribosomal protein uL18 family. Part of the 50S ribosomal subunit; part of the 5S rRNA/L5/L18/L25 subcomplex. Contacts the 5S and 23S rRNAs.

Functionally, this is one of the proteins that bind and probably mediate the attachment of the 5S RNA into the large ribosomal subunit, where it forms part of the central protuberance. The protein is Large ribosomal subunit protein uL18 of Methylococcus capsulatus (strain ATCC 33009 / NCIMB 11132 / Bath).